Here is a 475-residue protein sequence, read N- to C-terminus: Ribulose bisphosphate carboxylase large chain (475 aa).

Positions 1–2 are excised as a propeptide; sequence MS. An N-acetylproline modification is found at Pro3. Lys14 carries the post-translational modification N6,N6,N6-trimethyllysine. The substrate site is built by Asn123 and Thr173. Lys175 functions as the Proton acceptor in the catalytic mechanism. Lys177 contributes to the substrate binding site. Lys201, Asp203, and Glu204 together coordinate Mg(2+). An N6-carboxylysine modification is found at Lys201. The Proton acceptor role is filled by His294. 3 residues coordinate substrate: Arg295, His327, and Ser379.

The protein belongs to the RuBisCO large chain family. Type I subfamily. In terms of assembly, heterohexadecamer of 8 large chains and 8 small chains; disulfide-linked. The disulfide link is formed within the large subunit homodimers. Mg(2+) is required as a cofactor. In terms of processing, the disulfide bond which can form in the large chain dimeric partners within the hexadecamer appears to be associated with oxidative stress and protein turnover.

The protein resides in the plastid. It localises to the chloroplast. It carries out the reaction 2 (2R)-3-phosphoglycerate + 2 H(+) = D-ribulose 1,5-bisphosphate + CO2 + H2O. The enzyme catalyses D-ribulose 1,5-bisphosphate + O2 = 2-phosphoglycolate + (2R)-3-phosphoglycerate + 2 H(+). Its function is as follows. RuBisCO catalyzes two reactions: the carboxylation of D-ribulose 1,5-bisphosphate, the primary event in carbon dioxide fixation, as well as the oxidative fragmentation of the pentose substrate in the photorespiration process. Both reactions occur simultaneously and in competition at the same active site. The sequence is that of Ribulose bisphosphate carboxylase large chain from Oenothera argillicola (Appalachian evening primrose).